The chain runs to 171 residues: Adenine phosphoribosyltransferase (171 aa).

The protein belongs to the purine/pyrimidine phosphoribosyltransferase family. Homodimer.

Its subcellular location is the cytoplasm. It carries out the reaction AMP + diphosphate = 5-phospho-alpha-D-ribose 1-diphosphate + adenine. It functions in the pathway purine metabolism; AMP biosynthesis via salvage pathway; AMP from adenine: step 1/1. Its function is as follows. Catalyzes a salvage reaction resulting in the formation of AMP, that is energically less costly than de novo synthesis. The chain is Adenine phosphoribosyltransferase from Mesomycoplasma hyopneumoniae (strain 232) (Mycoplasma hyopneumoniae).